A 141-amino-acid chain; its full sequence is Lysozyme P (141 aa).

A signal peptide spans 1-18 (MKAFLVICALTLTAVATQ). Residues 20 to 141 (RTMDRCSLAR…GSLPSINSCF (122 aa)) form the C-type lysozyme domain. 4 disulfide bridges follow: cysteine 25–cysteine 140, cysteine 46–cysteine 130, cysteine 81–cysteine 97, and cysteine 93–cysteine 111. Catalysis depends on residues glutamate 51 and aspartate 69.

The protein belongs to the glycosyl hydrolase 22 family. As to expression, salivary gland.

The enzyme catalyses Hydrolysis of (1-&gt;4)-beta-linkages between N-acetylmuramic acid and N-acetyl-D-glucosamine residues in a peptidoglycan and between N-acetyl-D-glucosamine residues in chitodextrins.. Unlikely to play an active role in the humoral immune defense. May have a function in the digestion of bacteria in the food. In Drosophila melanogaster (Fruit fly), this protein is Lysozyme P (LysP).